The following is a 258-amino-acid chain: Pimeloyl-[acyl-carrier protein] methyl ester esterase (258 aa).

Residues 16–242 (LVLLHGWGLN…AAHAPFISHP (227 aa)) enclose the AB hydrolase-1 domain. Substrate-binding positions include tryptophan 22, 82 to 83 (SM), and 143 to 147 (FLALQ). Serine 82 acts as the Nucleophile in catalysis. Active-site residues include aspartate 207 and histidine 235. Histidine 235 contacts substrate.

It belongs to the AB hydrolase superfamily. Carboxylesterase BioH family. Monomer.

The protein resides in the cytoplasm. It catalyses the reaction 6-carboxyhexanoyl-[ACP] methyl ester + H2O = 6-carboxyhexanoyl-[ACP] + methanol + H(+). Its pathway is cofactor biosynthesis; biotin biosynthesis. The physiological role of BioH is to remove the methyl group introduced by BioC when the pimeloyl moiety is complete. It allows to synthesize pimeloyl-ACP via the fatty acid synthetic pathway through the hydrolysis of the ester bonds of pimeloyl-ACP esters. The polypeptide is Pimeloyl-[acyl-carrier protein] methyl ester esterase (Yersinia pseudotuberculosis serotype O:1b (strain IP 31758)).